A 515-amino-acid chain; its full sequence is Integrator complex subunit 14 (515 aa).

The 203-residue stretch at 2–204 (PTVVVMDVSL…KNVQSMFGKL (203 aa)) folds into the VWFA domain. Residues serine 10, serine 12, and threonine 86 each coordinate Mg(2+). Lysine 418 is subject to N6-acetyllysine.

The protein belongs to the Integrator subunit 14 family. As to quaternary structure, component of the Integrator complex, composed of core subunits INTS1, INTS2, INTS3, INTS4, INTS5, INTS6, INTS7, INTS8, INTS9/RC74, INTS10, INTS11/CPSF3L, INTS12, INTS13, INTS14 and INTS15. The core complex associates with protein phosphatase 2A subunits PPP2CA and PPP2R1A, to form the Integrator-PP2A (INTAC) complex. INTS14 is part of the tail subcomplex, composed of INTS10, INTS13, INTS14 and INTS15.

It localises to the nucleus. In terms of biological role, component of the integrator complex, a multiprotein complex that terminates RNA polymerase II (Pol II) transcription in the promoter-proximal region of genes. The integrator complex provides a quality checkpoint during transcription elongation by driving premature transcription termination of transcripts that are unfavorably configured for transcriptional elongation: the complex terminates transcription by (1) catalyzing dephosphorylation of the C-terminal domain (CTD) of Pol II subunit POLR2A/RPB1 and SUPT5H/SPT5, (2) degrading the exiting nascent RNA transcript via endonuclease activity and (3) promoting the release of Pol II from bound DNA. The integrator complex is also involved in terminating the synthesis of non-coding Pol II transcripts, such as enhancer RNAs (eRNAs), small nuclear RNAs (snRNAs), telomerase RNAs and long non-coding RNAs (lncRNAs). Within the integrator complex, INTS14 is part of the integrator tail module that acts as a platform for the recruitment of transcription factors at promoters. In Rattus norvegicus (Rat), this protein is Integrator complex subunit 14.